A 193-amino-acid polypeptide reads, in one-letter code: Peptidyl-tRNA hydrolase (193 aa).

Tyrosine 16 contributes to the tRNA binding site. Histidine 21 functions as the Proton acceptor in the catalytic mechanism. Positions 67, 69, and 115 each coordinate tRNA.

The protein belongs to the PTH family. Monomer.

The protein resides in the cytoplasm. The enzyme catalyses an N-acyl-L-alpha-aminoacyl-tRNA + H2O = an N-acyl-L-amino acid + a tRNA + H(+). Hydrolyzes ribosome-free peptidyl-tRNAs (with 1 or more amino acids incorporated), which drop off the ribosome during protein synthesis, or as a result of ribosome stalling. Its function is as follows. Catalyzes the release of premature peptidyl moieties from peptidyl-tRNA molecules trapped in stalled 50S ribosomal subunits, and thus maintains levels of free tRNAs and 50S ribosomes. This Psychrobacter cryohalolentis (strain ATCC BAA-1226 / DSM 17306 / VKM B-2378 / K5) protein is Peptidyl-tRNA hydrolase.